Reading from the N-terminus, the 484-residue chain is tRNA-2-methylthio-N(6)-dimethylallyladenosine synthase (484 aa).

One can recognise an MTTase N-terminal domain in the interval 36-153 (GKLYIKTHGC…LPELIRARRE (118 aa)). The [4Fe-4S] cluster site is built by Cys-45, Cys-82, Cys-116, Cys-190, Cys-194, and Cys-197. The 240-residue stretch at 176-415 (RAEGPSAFVS…HINAHAASIS (240 aa)) folds into the Radical SAM core domain. Residues 416-479 (QSMVGSVQRV…SNSLRGRIQL (64 aa)) form the TRAM domain. The segment at 428–450 (EGPSRRDPNELTGKSENMRPVNF) is disordered.

This sequence belongs to the methylthiotransferase family. MiaB subfamily. As to quaternary structure, monomer. [4Fe-4S] cluster is required as a cofactor.

The protein localises to the cytoplasm. The enzyme catalyses N(6)-dimethylallyladenosine(37) in tRNA + (sulfur carrier)-SH + AH2 + 2 S-adenosyl-L-methionine = 2-methylsulfanyl-N(6)-dimethylallyladenosine(37) in tRNA + (sulfur carrier)-H + 5'-deoxyadenosine + L-methionine + A + S-adenosyl-L-homocysteine + 2 H(+). In terms of biological role, catalyzes the methylthiolation of N6-(dimethylallyl)adenosine (i(6)A), leading to the formation of 2-methylthio-N6-(dimethylallyl)adenosine (ms(2)i(6)A) at position 37 in tRNAs that read codons beginning with uridine. The sequence is that of tRNA-2-methylthio-N(6)-dimethylallyladenosine synthase from Xanthomonas euvesicatoria pv. vesicatoria (strain 85-10) (Xanthomonas campestris pv. vesicatoria).